The chain runs to 519 residues: NADH-quinone oxidoreductase subunit C/D (519 aa).

Residues 1–138 (MSERIEIPAE…TNEEPVDTTQ (138 aa)) are NADH dehydrogenase I subunit C. The interval 159 to 519 (DEYIINIGPQ…VDYVVPDIDR (361 aa)) is NADH dehydrogenase I subunit D.

In the N-terminal section; belongs to the complex I 30 kDa subunit family. It in the C-terminal section; belongs to the complex I 49 kDa subunit family. NDH-1 is composed of 13 different subunits. Subunits NuoB, CD, E, F, and G constitute the peripheral sector of the complex.

It is found in the cell inner membrane. It carries out the reaction a quinone + NADH + 5 H(+)(in) = a quinol + NAD(+) + 4 H(+)(out). In terms of biological role, NDH-1 shuttles electrons from NADH, via FMN and iron-sulfur (Fe-S) centers, to quinones in the respiratory chain. The immediate electron acceptor for the enzyme in this species is believed to be a menaquinone. Couples the redox reaction to proton translocation (for every two electrons transferred, four hydrogen ions are translocated across the cytoplasmic membrane), and thus conserves the redox energy in a proton gradient. This Phocaeicola vulgatus (strain ATCC 8482 / DSM 1447 / JCM 5826 / CCUG 4940 / NBRC 14291 / NCTC 11154) (Bacteroides vulgatus) protein is NADH-quinone oxidoreductase subunit C/D.